Here is a 289-residue protein sequence, read N- to C-terminus: LBH domain-containing protein 1 (289 aa).

2 disordered regions span residues 1–36 (MALV…PLWD) and 205–289 (EGAE…ASQD). One can recognise an LBH domain in the interval 1 to 128 (MALVPGRSKE…AEAFFQDQSE (128 aa)). The span at 15–25 (TRNSPGSSQHP) shows a compositional bias: polar residues.

As to expression, expressed in bladder cancer tissues (at protein level).

In Homo sapiens (Human), this protein is LBH domain-containing protein 1.